Reading from the N-terminus, the 152-residue chain is Deoxyuridine 5'-triphosphate nucleotidohydrolase (152 aa).

Residues 71-73 (RSG), N84, 88-90 (LID), and M98 each bind substrate.

Belongs to the dUTPase family. The cofactor is Mg(2+).

The enzyme catalyses dUTP + H2O = dUMP + diphosphate + H(+). It functions in the pathway pyrimidine metabolism; dUMP biosynthesis; dUMP from dCTP (dUTP route): step 2/2. In terms of biological role, this enzyme is involved in nucleotide metabolism: it produces dUMP, the immediate precursor of thymidine nucleotides and it decreases the intracellular concentration of dUTP so that uracil cannot be incorporated into DNA. The polypeptide is Deoxyuridine 5'-triphosphate nucleotidohydrolase (Hahella chejuensis (strain KCTC 2396)).